Here is a 398-residue protein sequence, read N- to C-terminus: S-adenosylmethionine synthase (398 aa).

Residue His-16 participates in ATP binding. Asp-18 serves as a coordination point for Mg(2+). A K(+)-binding site is contributed by Glu-51. L-methionine is bound by residues Glu-64 and Gln-108. A flexible loop region spans residues 108-118; that stretch reads QSADIAQGVDA. ATP is bound by residues 176–178, 242–243, Asp-251, 257–258, Ala-274, and Lys-278; these read DSK, KF, and RK. Residue Asp-251 coordinates L-methionine. Lys-282 provides a ligand contact to L-methionine.

This sequence belongs to the AdoMet synthase family. In terms of assembly, homotetramer; dimer of dimers. Requires Mg(2+) as cofactor. It depends on K(+) as a cofactor.

Its subcellular location is the cytoplasm. It carries out the reaction L-methionine + ATP + H2O = S-adenosyl-L-methionine + phosphate + diphosphate. Its pathway is amino-acid biosynthesis; S-adenosyl-L-methionine biosynthesis; S-adenosyl-L-methionine from L-methionine: step 1/1. In terms of biological role, catalyzes the formation of S-adenosylmethionine (AdoMet) from methionine and ATP. The overall synthetic reaction is composed of two sequential steps, AdoMet formation and the subsequent tripolyphosphate hydrolysis which occurs prior to release of AdoMet from the enzyme. In Rhodopseudomonas palustris (strain BisB5), this protein is S-adenosylmethionine synthase.